The sequence spans 264 residues: Triosephosphate isomerase (264 aa).

13–15 (NWK) serves as a coordination point for substrate. Residue H98 is the Electrophile of the active site. Residue E170 is the Proton acceptor of the active site. Substrate is bound by residues G176, S216, and 237 to 238 (GG).

Belongs to the triosephosphate isomerase family. In terms of assembly, homodimer.

The protein resides in the cytoplasm. The catalysed reaction is D-glyceraldehyde 3-phosphate = dihydroxyacetone phosphate. It functions in the pathway carbohydrate biosynthesis; gluconeogenesis. Its pathway is carbohydrate degradation; glycolysis; D-glyceraldehyde 3-phosphate from glycerone phosphate: step 1/1. Involved in the gluconeogenesis. Catalyzes stereospecifically the conversion of dihydroxyacetone phosphate (DHAP) to D-glyceraldehyde-3-phosphate (G3P). This Protochlamydia amoebophila (strain UWE25) protein is Triosephosphate isomerase.